Consider the following 325-residue polypeptide: Tagatose 1,6-diphosphate aldolase 1 (325 aa).

The protein belongs to the aldolase LacD family.

It carries out the reaction D-tagatofuranose 1,6-bisphosphate = D-glyceraldehyde 3-phosphate + dihydroxyacetone phosphate. It functions in the pathway carbohydrate metabolism; D-tagatose 6-phosphate degradation; D-glyceraldehyde 3-phosphate and glycerone phosphate from D-tagatose 6-phosphate: step 2/2. In Streptococcus pyogenes serotype M3 (strain SSI-1), this protein is Tagatose 1,6-diphosphate aldolase 1 (lacD1).